Here is a 196-residue protein sequence, read N- to C-terminus: 3-isopropylmalate dehydratase small subunit (196 aa).

It belongs to the LeuD family. LeuD type 1 subfamily. Heterodimer of LeuC and LeuD.

It carries out the reaction (2R,3S)-3-isopropylmalate = (2S)-2-isopropylmalate. It functions in the pathway amino-acid biosynthesis; L-leucine biosynthesis; L-leucine from 3-methyl-2-oxobutanoate: step 2/4. In terms of biological role, catalyzes the isomerization between 2-isopropylmalate and 3-isopropylmalate, via the formation of 2-isopropylmaleate. This is 3-isopropylmalate dehydratase small subunit from Herpetosiphon aurantiacus (strain ATCC 23779 / DSM 785 / 114-95).